Reading from the N-terminus, the 260-residue chain is NAD kinase (260 aa).

Aspartate 49 (proton acceptor) is an active-site residue. NAD(+)-binding positions include 49 to 50 (DG), 119 to 120 (NE), aspartate 149, alanine 157, and 160 to 165 (TAYNLS).

This sequence belongs to the NAD kinase family. A divalent metal cation is required as a cofactor.

It localises to the cytoplasm. The catalysed reaction is NAD(+) + ATP = ADP + NADP(+) + H(+). Involved in the regulation of the intracellular balance of NAD and NADP, and is a key enzyme in the biosynthesis of NADP. Catalyzes specifically the phosphorylation on 2'-hydroxyl of the adenosine moiety of NAD to yield NADP. In Caulobacter vibrioides (strain ATCC 19089 / CIP 103742 / CB 15) (Caulobacter crescentus), this protein is NAD kinase.